Consider the following 115-residue polypeptide: Parathyroid hormone (115 aa).

A signal peptide spans 1–25 (MMSAKDTVKVMVVMLAICFLARSDG). The propeptide occupies 26–31 (KPIKKR). The important for receptor binding stretch occupies residues 51–69 (RVEWLRKKLQDVHNFVALG). The interval 75–98 (RDGGSQRPRKKEDNVLVESHQKSL) is disordered.

Belongs to the parathyroid hormone family. As to quaternary structure, interacts with PTH1R (via N-terminal extracellular domain).

It localises to the secreted. In terms of biological role, parathyroid hormone elevates calcium level by dissolving the salts in bone and preventing their renal excretion. Acts by binding to its receptor, PTH1R, activating G protein-coupled receptor signaling. Stimulates [1-14C]-2-deoxy-D-glucose (2DG) transport and glycogen synthesis in osteoblastic cells. The polypeptide is Parathyroid hormone (PTH) (Sus scrofa (Pig)).